Here is an 886-residue protein sequence, read N- to C-terminus: Isoleucine--tRNA ligase (886 aa).

Positions 60–70 match the 'HIGH' region motif; it reads PYANGDIHIGH. Glu-546 provides a ligand contact to L-isoleucyl-5'-AMP. The 'KMSKS' region signature appears at 587 to 591; it reads KMSKS. ATP is bound at residue Lys-590. Residues Cys-856, Cys-859, Cys-870, and Cys-873 each coordinate Zn(2+).

The protein belongs to the class-I aminoacyl-tRNA synthetase family. IleS type 1 subfamily. In terms of assembly, monomer. The cofactor is Zn(2+).

The protein localises to the cytoplasm. The enzyme catalyses tRNA(Ile) + L-isoleucine + ATP = L-isoleucyl-tRNA(Ile) + AMP + diphosphate. Catalyzes the attachment of isoleucine to tRNA(Ile). As IleRS can inadvertently accommodate and process structurally similar amino acids such as valine, to avoid such errors it has two additional distinct tRNA(Ile)-dependent editing activities. One activity is designated as 'pretransfer' editing and involves the hydrolysis of activated Val-AMP. The other activity is designated 'posttransfer' editing and involves deacylation of mischarged Val-tRNA(Ile). The sequence is that of Isoleucine--tRNA ligase from Mesomycoplasma hyopneumoniae (strain 7448) (Mycoplasma hyopneumoniae).